The primary structure comprises 600 residues: MKYVLVSGGVISGIGKGVIASSTGLLLKTLGLKVTSIKIDPYMNIDAGTMSPLEHGEVFVLNDGGEVDLDLGNYERYLNVTLTHDNNITTGKVYSNVIQKERRGDYLGKTVQIVPHVTNEIQDWVERVARIPVDQSGEEPDVCIVELGGTVGDIESAAFVEAMRQFQFRVGHENFVSIHVSLVPVINGEQKTKPTQQAIRDLRSLGITPDLIACRCKQPLEKSVIDKISLFCHVGPEQVLAVHDVSSTYHVPQLLEDKLLEYLKIRFALDKISVSRELALAGENMWSSWKHLTQGYDHLFKKVTIVLVGKYTHLQDSYISVIKALEHSAMRCGRKLDLQWVEASHLEASTNTSDPLSYHKAWHLVCSANGILVPGGFGSRGVEGMIAAAKWARENNTPYLGICLGMQVAVIEFARSVCGIEGAFSEEFDKECENNVVVYMPEIDKDKLGGTMRLGLRPTFFQPNSEWSKLRKLHKMVDEVLERHRHRYEINPAFVSRLEQGGISFIGKDERGERMEIIEKRDHPYFVGVQYHPEYLSKPLKPSPPIFGLVAASAGLLDEFIQSGEEVEWSNFSHFNAESALADMNDSVEVTEEATVVTIS.

Residues 304–570 form the Glutamine amidotransferase type-1 domain; that stretch reads TIVLVGKYTH…IQSGEEVEWS (267 aa). Catalysis depends on for GATase activity residues Cys403, His532, and Glu534.

Belongs to the CTP synthase family.

It carries out the reaction UTP + L-glutamine + ATP + H2O = CTP + L-glutamate + ADP + phosphate + 2 H(+). It participates in pyrimidine metabolism; CTP biosynthesis via de novo pathway; CTP from UDP: step 2/2. Its function is as follows. Catalyzes the ATP-dependent amination of UTP to CTP with either L-glutamine or ammonia as the source of nitrogen. The protein is CTP synthase (ura7) of Schizosaccharomyces pombe (strain 972 / ATCC 24843) (Fission yeast).